Consider the following 184-residue polypeptide: Effector CFEM1 (184 aa).

An N-terminal signal peptide occupies residues 1–17 (MKYSVAFVALAAVAAQA). Positions 18-112 (QSLADVPKCA…PTTTAAATST (95 aa)) constitute a CFEM domain. 4 disulfides stabilise this stretch: Cys-26-Cys-68, Cys-30-Cys-63, Cys-41-Cys-48, and Cys-50-Cys-85. Asp-45 is a binding site for heme. Disordered stretches follow at residues 83–106 (NLCKNPPKESEAKSTAEEEKPTTT) and 136–163 (IIPTTAAEEPATSTPAAATPTKGPEQAN). Residues 88 to 103 (PPKESEAKSTAEEEKP) show a composition bias toward basic and acidic residues. A lipid anchor (GPI-anchor amidated asparagine) is attached at Asn-163. A propeptide spans 164 to 184 (GAAGLKGLGALAMAAFAALAL) (removed in mature form).

The protein belongs to the RBT5 family. Interacts with Z.mays LRR5; the interaction is direct. Interacts (via CFEM domain) with Z.mays WAK17 isoform 2; the interaction is direct.

The protein resides in the secreted. It is found in the cell wall. It localises to the cell membrane. The protein localises to the cell septum. Its subcellular location is the cytoplasm. Suppresses host programmed cell death during infection by binding to Z.mays WAK17 isoform 2 and Z.mays LRR5, to prevent activation of Z.mays WAK17 isoform 1 and the downstream hypersensitive response. The protein is Effector CFEM1 of Gibberella zeae (strain ATCC MYA-4620 / CBS 123657 / FGSC 9075 / NRRL 31084 / PH-1) (Wheat head blight fungus).